The chain runs to 221 residues: MVRLVPRAFAATVALLAAGFSPATASADPVLVFPGMEIRQDNHVCTLGYVDPALKIAFTAGHCRGGGAVTSRDYKVIGHLRAIRDNTPSGSTVATHELIADYEAIVLADDVTASNILPSGRALESRPGVVLHPGQAVCHFGVSTGETCGTVESVNNGWFTMSHGVLSEKGDSGGPVYLAPDGGPAQIVGIFNSVWGGFPAAVSWRSTSEQVHADLGVTPLA.

The N-terminal stretch at 1–26 is a signal peptide; that stretch reads MVRLVPRAFAATVALLAAGFSPATAS.

This is an uncharacterized protein from Mycobacterium tuberculosis (strain ATCC 25618 / H37Rv).